Consider the following 243-residue polypeptide: Probable aquaporin SIP1-2 (243 aa).

The next 2 helical transmembrane spans lie at 12–32 (VITFLWVILSATFGIQTAAIV) and 42–62 (WAPLVISTLVVFVSISIFTVI). Residues 72-74 (NPC) carry the NPA 1 motif. 3 helical membrane-spanning segments follow: residues 90 to 110 (FSLAIRSPAQAIGAAGGAITI), 135 to 155 (GAISEVVLSFSVTFLVLLIIL), and 162 to 182 (LAKTFLLALATVSVFVVGSKF). The NPA 2 motif lies at 188–190 (NPA). The helical transmembrane segment at 210 to 230 (VYWISSYTGAILSAMLFRIIF) threads the bilayer.

This sequence belongs to the MIP/aquaporin (TC 1.A.8) family. SIP (TC 1.A.8.10) subfamily. In terms of tissue distribution, expressed in roots and above ground. Expressed in elongating regions of the root tips, cotyledons, minor veins and hydathode cells of the rosette leaves. Weakly expressed in vascular tissues of the flower petals, filaments of stamens, upper part of the styles and receptacles of the siliques.

The protein resides in the endoplasmic reticulum membrane. In terms of biological role, water channel required to facilitate the transport of water across cell membrane. The chain is Probable aquaporin SIP1-2 (SIP1-2) from Arabidopsis thaliana (Mouse-ear cress).